The chain runs to 953 residues: Pyruvate, phosphate dikinase, chloroplastic (953 aa).

The N-terminal 77 residues, 1–77, are a transit peptide targeting the chloroplast; sequence MMSSLSVEGM…VLNPVSPPVT (77 aa). Residues 55–74 form a disordered region; it reads PELRSSGLTPPRAVLNPVSP. Thr-533 carries the post-translational modification Phosphothreonine; by PDRP1. His-535 acts as the Tele-phosphohistidine intermediate in catalysis. 7 residues coordinate substrate: Arg-641, Arg-698, Glu-827, Gly-848, Thr-849, Asn-850, and Asp-851. Glu-827 contributes to the Mg(2+) binding site. Asp-851 contributes to the Mg(2+) binding site. Cys-913 (proton donor) is an active-site residue.

Belongs to the PEP-utilizing enzyme family. In terms of assembly, homotetramer. Requires Mg(2+) as cofactor. Post-translationally, phosphorylation of Thr-533 in the dark inactivates the enzyme. Dephosphorylation upon light stimulation reactivates the enzyme.

Its subcellular location is the plastid. It is found in the chloroplast. The enzyme catalyses pyruvate + phosphate + ATP = phosphoenolpyruvate + AMP + diphosphate + H(+). It functions in the pathway photosynthesis; C4 acid pathway. Activated by light-induced dephosphorylation. Inhibited by dark-induced phosphorylation. Both reactions are catalyzed by PDRP1. Inactivated by cold due to the dissociation of the homotetramer. Formation of phosphoenolpyruvate, which is the primary acceptor of CO(2) in C4 and some Crassulacean acid metabolism plants. This Flaveria bidentis (Coastal plain yellowtops) protein is Pyruvate, phosphate dikinase, chloroplastic.